Here is a 369-residue protein sequence, read N- to C-terminus: 2-aminoethylphosphonate--pyruvate transaminase (369 aa).

Lys193 is subject to N6-(pyridoxal phosphate)lysine.

The protein belongs to the class-V pyridoxal-phosphate-dependent aminotransferase family. PhnW subfamily. Homodimer. The cofactor is pyridoxal 5'-phosphate.

It catalyses the reaction (2-aminoethyl)phosphonate + pyruvate = phosphonoacetaldehyde + L-alanine. Functionally, involved in phosphonate degradation. The protein is 2-aminoethylphosphonate--pyruvate transaminase of Burkholderia pseudomallei (strain 1106a).